A 911-amino-acid polypeptide reads, in one-letter code: Protein translocase subunit SecA (911 aa).

Residues glutamine 90, 108-112 (GEGKT), and aspartate 515 contribute to the ATP site. Zn(2+)-binding residues include cysteine 891, cysteine 893, cysteine 902, and histidine 903.

Belongs to the SecA family. As to quaternary structure, monomer and homodimer. Part of the essential Sec protein translocation apparatus which comprises SecA, SecYEG and auxiliary proteins SecDF-YajC and YidC. The cofactor is Zn(2+).

It is found in the cell inner membrane. The protein resides in the cytoplasm. The enzyme catalyses ATP + H2O + cellular proteinSide 1 = ADP + phosphate + cellular proteinSide 2.. Functionally, part of the Sec protein translocase complex. Interacts with the SecYEG preprotein conducting channel. Has a central role in coupling the hydrolysis of ATP to the transfer of proteins into and across the cell membrane, serving both as a receptor for the preprotein-SecB complex and as an ATP-driven molecular motor driving the stepwise translocation of polypeptide chains across the membrane. In Blochmanniella pennsylvanica (strain BPEN), this protein is Protein translocase subunit SecA.